A 985-amino-acid chain; its full sequence is MSTGLTPPPQPIKRPPKAVTWIFAIIALVILIAPMSVGFYTDWLWFGEVDFRGVFSKVIVTRIVLFVIFALIAGFVTWLAGYFVTKLRPDEMSAFDTQSPVYQYRQMIENSLRRVMVIIPIFVALLAGLIGQRSWRTVQMWLNGQDFGVSDQQFGLDYGFYAFDLPMLRLIADSLSMMLIVAFLIALVGHYLMGGIRAGNQMTGQKSFVSRGARTQLAVTAGLWMLVKVAGYWLDRYDLLTKENSTFTGASYTDINAQLPAKIILLVIALFVAIAFFSAIFLKDLRIPGLAVVLMLLSSVIIGAAWPLMLERFSVQPNRAEKEAEYISRNIESTRYAYGITDEDVTYEENWGAGETTNEEVAADSATISNIRLLDPQILSPTFTQQQQLRNFYGFPDQLAMDRFEVDGKLRDFVVAARELDPNALQQNQQDWINRHTVYTHGNGFIAAQANQVDEVARDVGSTRGGYPVYTVSDLQSNARAAESEDAEELGIKVDEPRVYYGPLIASATDGADYAIVGDTGDGPVEYDTDTSSYTYEGAGGVDIGNMVNRAMFALRYQEMNMLLSDRVGSESKILFERDPRSRVEKVAPWLTTDSKTYPTVIDGRIKWIVDGYTTLDSLPYSTRTSLTEATQDAVMPDGTPQPLITDRVGYIRNSVKAVVDAYDGTVELYEFDTEDPVLKAWRGVFPDTVKDGSEISDELRAHLRYPEDLFKVQRDMLAKYNVDDSGTFFTNDAFWSVPGDPTAAEGRQELKQPPYYVVAADPETGESSFQLITPFRGLQREYLSAHMSASSDPVTYGEITVRVLPTDSVTQGPKQAQDAMMSSDQVAQDQTLWRGSNDLHNGNLLTLPVGGGEILYVEPIYSQRKDQASAFPKLLRVLVFYKGQVGYAPTIAEALSQVGIDPKEAQDIEEVDGTATTPSTDETDTDTDQPATETPTAPVSEAEGIAAINDALSNLEAARDSSFEEYGRALDALDRAVDSYQSAQ.

Helical transmembrane passes span 19-39, 63-83, 115-135, 176-196, 215-235, 262-282, and 290-310; these read VTWI…SVGF, IVLF…AGYF, VMVI…QRSW, SMML…MGGI, TQLA…YWLD, KIIL…AIFL, and LAVV…PLML. Residues 904–944 form a disordered region; it reads KEAQDIEEVDGTATTPSTDETDTDTDQPATETPTAPVSEAE. Residues 929–939 show a composition bias toward low complexity; sequence DQPATETPTAP.

Belongs to the UPF0182 family.

The protein localises to the cell membrane. This Corynebacterium glutamicum (strain ATCC 13032 / DSM 20300 / JCM 1318 / BCRC 11384 / CCUG 27702 / LMG 3730 / NBRC 12168 / NCIMB 10025 / NRRL B-2784 / 534) protein is UPF0182 protein Cgl0786/cg0896.